The chain runs to 428 residues: A-kinase anchor protein 5 (428 aa).

The segment at 1-170 is essential to the intracellular anchoring function; it reads MEITVSEIQV…VTKTQTQSDD (170 aa). Disordered regions lie at residues 1 to 207 and 237 to 313; these read MEIT…SPGE and LEEK…TELS. Residues 10–32 are compositionally biased toward basic and acidic residues; sequence VESKDETRSAEVRPQDERQEEKA. Cys-36 carries the S-palmitoyl cysteine lipid modification. Basic residues predominate over residues 37–48; it reads FKRRKKAAKAMK. Residues 57–68 are compositionally biased toward basic and acidic residues; it reads DAAKKCPPEARA. Residues 76-96 carry the AKAP CaM-binding motif; that stretch reads GGAWDSIKRLVTRRKRSESSK. Thr-87 bears the Phosphothreonine; by PKC mark. Ser-92 is modified (phosphoserine; by PKA). Ser-94 is subject to Phosphoserine; by PKC. A lipid anchor (S-palmitoyl cysteine) is attached at Cys-129. Basic and acidic residues predominate over residues 133–156; the sequence is SKGEKRSNHSKIIEDSDRSVKVQE. The segment covering 161–170 has biased composition (polar residues); it reads VTKTQTQSDD. 2 stretches are compositionally biased toward basic and acidic residues: residues 171–191 and 290–311; these read QATK…KGDD and PDWK…KDTE. Residues 389–410 are RII-beta subunit binding domain; the sequence is YETLLIETASSLVKNAIQLSIE. The segment at 411–428 is tethers NFATC2 to CRAC channels; that stretch reads QLVNEMASDDNTINNRLQ.

In terms of assembly, binding protein for dimer of the RII-beta regulatory subunit of cAMP-dependent protein kinase (PKA) and also for the protein kinase C (PKC) and the phosphatase calcineurin (PP2B). Each enzyme is inhibited when bound to the anchoring protein. Also binds the beta2-adrenergic receptor. Part of a complex containing AKAP5, ADCY5, ADCY6 and PDE4C. Interacts with ADCY8, and enhances its phosphorylation at lipid rafts. Interacts with ORAI1 (isoform alpha) (via N-terminus) upon store depletion and in response to LTC4. Does not interact with ORAI2 and ORAI3 paralogs. Interacts (via leucine zipper domain) with NFATC2/NFAT1. Interacts with calmodulin; the interaction is calcium-independent. Interacts with KCNQ2; the interaction may help KCNQ2 channel complex to retain calcium-bound calmodulin. Palmitoylated. Palmitoylation at Cys-36 and Cys-129 play a key role in the targeting of AKAP5 to lipid rafts. Palmitoylation by ZDHHC2 is required for AKAP5 function in LTP-stimulated recycling endosome exocytosis. As to expression, predominantly in brain, and to a lesser extent in adrenal medulla, lung and anterior pituitary.

It localises to the postsynaptic recycling endosome membrane. Functionally, multivalent scaffold protein that anchors the cAMP-dependent protein kinase/PKA to cytoskeletal and/or organelle-associated proteins, targeting the signal carried by cAMP to specific intracellular effectors. Association with the beta2-adrenergic receptor (beta2-AR) not only regulates beta2-AR signaling pathway, but also the activation by PKA by switching off the beta2-AR signaling cascade. Plays a role in long term synaptic potentiation by regulating protein trafficking from the dendritic recycling endosomes to the plasma membrane and controlling both structural and functional plasticity at excitatory synapses. Associates with ORAI1 pore-forming subunit of CRAC channels in Ca(2+) signaling microdomains where it recruits NFATC2/NFAT1 and couples store-operated Ca(2+) influx to calmodulin and calcineurin signaling and activation of NFAT-dependent transcriptional responses. This Bos taurus (Bovine) protein is A-kinase anchor protein 5 (AKAP5).